Consider the following 310-residue polypeptide: Methionyl-tRNA formyltransferase (310 aa).

111 to 114 (SILP) is a (6S)-5,6,7,8-tetrahydrofolate binding site.

This sequence belongs to the Fmt family.

The enzyme catalyses L-methionyl-tRNA(fMet) + (6R)-10-formyltetrahydrofolate = N-formyl-L-methionyl-tRNA(fMet) + (6S)-5,6,7,8-tetrahydrofolate + H(+). In terms of biological role, attaches a formyl group to the free amino group of methionyl-tRNA(fMet). The formyl group appears to play a dual role in the initiator identity of N-formylmethionyl-tRNA by promoting its recognition by IF2 and preventing the misappropriation of this tRNA by the elongation apparatus. The protein is Methionyl-tRNA formyltransferase of Finegoldia magna (strain ATCC 29328 / DSM 20472 / WAL 2508) (Peptostreptococcus magnus).